A 36-amino-acid polypeptide reads, in one-letter code: Neuropeptide F (36 aa).

Position 36 is a phenylalanine amide (Phe-36).

Belongs to the NPY family. As to expression, central and peripheral nervous system, and muscular pharynx.

It is found in the secreted. In terms of biological role, may perform an important neurotransmitter function and may regulate muscular activity. This chain is Neuropeptide F, found in Arthurdendyus triangulatus (New Zealand flatworm).